The following is a 265-amino-acid chain: uncharacterized protein (265 aa).

It is found in the mitochondrion. This is an uncharacterized protein from Paramecium tetraurelia.